The following is a 240-amino-acid chain: Ubiquinone biosynthesis O-methyltransferase (240 aa).

Residues Arg36, Gly60, Asp81, and Leu123 each contribute to the S-adenosyl-L-methionine site.

The protein belongs to the methyltransferase superfamily. UbiG/COQ3 family.

It carries out the reaction a 3-demethylubiquinol + S-adenosyl-L-methionine = a ubiquinol + S-adenosyl-L-homocysteine + H(+). The catalysed reaction is a 3-(all-trans-polyprenyl)benzene-1,2-diol + S-adenosyl-L-methionine = a 2-methoxy-6-(all-trans-polyprenyl)phenol + S-adenosyl-L-homocysteine + H(+). It participates in cofactor biosynthesis; ubiquinone biosynthesis. Functionally, O-methyltransferase that catalyzes the 2 O-methylation steps in the ubiquinone biosynthetic pathway. The polypeptide is Ubiquinone biosynthesis O-methyltransferase (Rickettsia bellii (strain OSU 85-389)).